A 218-amino-acid polypeptide reads, in one-letter code: Thiopurine S-methyltransferase (218 aa).

S-adenosyl-L-methionine is bound by residues Trp10, Leu45, Glu66, and Arg123.

It belongs to the class I-like SAM-binding methyltransferase superfamily. TPMT family.

It localises to the cytoplasm. The enzyme catalyses S-adenosyl-L-methionine + a thiopurine = S-adenosyl-L-homocysteine + a thiopurine S-methylether.. The polypeptide is Thiopurine S-methyltransferase (Shewanella putrefaciens (strain CN-32 / ATCC BAA-453)).